The primary structure comprises 462 residues: 2-amino-5-chloromuconic acid deaminase (462 aa).

Residues Lys79 and Ser156 each act as charge relay system in the active site. Ser180 serves as the catalytic Acyl-ester intermediate.

Belongs to the amidase family.

The catalysed reaction is (2Z,4E)-2-aminomuconate + H2O = (3E)-2-oxohex-3-enedioate + NH4(+). It participates in xenobiotic degradation; nitrobenzene degradation. It functions in the pathway xenobiotic degradation; 4-chloronitrobenzene degradation. Its function is as follows. Involved in the biodegradation of nitroaromatic and chlorinated nitroaromatic compounds. Catalyzes the conversion of 2-amino-5-chloromuconic acid into 2-hydroxy-5-chloromuconic acid and ammonia. Also able to catalyze the transformation of 2-aminomuconic acid into 2-hydroxymuconic acid. This is 2-amino-5-chloromuconic acid deaminase from Comamonas testosteroni (Pseudomonas testosteroni).